Here is a 231-residue protein sequence, read N- to C-terminus: MSKLTKRQKTVGDKIDSNKLYALSDALGLVKEFAVAKFDESIDVAVQLGIDAKKSDQVVRGAVVLPNGTGKTKRVAVFAQGAKAEEAKAAGADIVGMDDLAADIKAGKMDFDVVIASPDAMRIVGTLGQILGPRGLMPNPKVGTVTPDVATAVRNAKAGQVQFRVDKAGIVHGTIGRRSFDTAKLQGNLAALVDALIKAKPATSKGVYLKKVAVSSTMGVGVRVDTQSIAA.

Belongs to the universal ribosomal protein uL1 family. Part of the 50S ribosomal subunit.

Functionally, binds directly to 23S rRNA. The L1 stalk is quite mobile in the ribosome, and is involved in E site tRNA release. Protein L1 is also a translational repressor protein, it controls the translation of the L11 operon by binding to its mRNA. The polypeptide is Large ribosomal subunit protein uL1 (Polaromonas naphthalenivorans (strain CJ2)).